The primary structure comprises 189 residues: dCTP deaminase (189 aa).

Residues 112 to 117 (KSTYAR), 136 to 138 (TLE), Gln157, Tyr171, and Gln181 each bind dCTP. The active-site Proton donor/acceptor is the Glu138.

The protein belongs to the dCTP deaminase family. In terms of assembly, homotrimer.

It catalyses the reaction dCTP + H2O + H(+) = dUTP + NH4(+). It participates in pyrimidine metabolism; dUMP biosynthesis; dUMP from dCTP (dUTP route): step 1/2. Its function is as follows. Catalyzes the deamination of dCTP to dUTP. The sequence is that of dCTP deaminase from Paraburkholderia phymatum (strain DSM 17167 / CIP 108236 / LMG 21445 / STM815) (Burkholderia phymatum).